We begin with the raw amino-acid sequence, 359 residues long: 3-dehydroquinate synthase (359 aa).

Residues 71–76 (DGEQYK), 105–109 (GVIGD), 129–130 (TT), K142, K151, and 169–172 (CLST) contribute to the NAD(+) site. Zn(2+) is bound by residues E184, H247, and H264.

It belongs to the sugar phosphate cyclases superfamily. Dehydroquinate synthase family. It depends on Co(2+) as a cofactor. Zn(2+) is required as a cofactor. Requires NAD(+) as cofactor.

It is found in the cytoplasm. It catalyses the reaction 7-phospho-2-dehydro-3-deoxy-D-arabino-heptonate = 3-dehydroquinate + phosphate. Its pathway is metabolic intermediate biosynthesis; chorismate biosynthesis; chorismate from D-erythrose 4-phosphate and phosphoenolpyruvate: step 2/7. Its function is as follows. Catalyzes the conversion of 3-deoxy-D-arabino-heptulosonate 7-phosphate (DAHP) to dehydroquinate (DHQ). The protein is 3-dehydroquinate synthase of Shewanella halifaxensis (strain HAW-EB4).